A 163-amino-acid polypeptide reads, in one-letter code: MALNLQDKQAIVAEVNEAAKGALSAVIADSRGVTVEKMTELRKSAREAGVTMRVVRNTLLRRAVEGTDYECLKDTFVGPTLIAFSNEHPGAAARLFKEFAKANDKFEIKGAAFEGKIQDVEFLATLPTYEEAIARLMGTMKEAAAGKLARTLAALRDKLQEAA.

The protein belongs to the universal ribosomal protein uL10 family. In terms of assembly, part of the ribosomal stalk of the 50S ribosomal subunit. The N-terminus interacts with L11 and the large rRNA to form the base of the stalk. The C-terminus forms an elongated spine to which L12 dimers bind in a sequential fashion forming a multimeric L10(L12)X complex.

Functionally, forms part of the ribosomal stalk, playing a central role in the interaction of the ribosome with GTP-bound translation factors. This Haemophilus influenzae (strain PittGG) protein is Large ribosomal subunit protein uL10.